A 506-amino-acid chain; its full sequence is Probable Xaa-Pro aminopeptidase BDBG_08406 (506 aa).

The Mn(2+) site is built by D285, D296, E433, and E471.

The protein belongs to the peptidase M24B family. Mn(2+) is required as a cofactor.

The enzyme catalyses Release of any N-terminal amino acid, including proline, that is linked to proline, even from a dipeptide or tripeptide.. Functionally, catalyzes the removal of a penultimate prolyl residue from the N-termini of peptides. In Blastomyces gilchristii (strain SLH14081) (Blastomyces dermatitidis), this protein is Probable Xaa-Pro aminopeptidase BDBG_08406.